Here is a 179-residue protein sequence, read N- to C-terminus: Inner membrane-spanning protein YciB (179 aa).

5 helical membrane-spanning segments follow: residues 22–42, 50–70, 76–96, 121–141, and 149–169; these read IYAA…YSWV, MALI…FFHN, WKVT…QWVM, LAWA…AFWL, and FKVF…GVYI.

It belongs to the YciB family.

The protein localises to the cell inner membrane. In terms of biological role, plays a role in cell envelope biogenesis, maintenance of cell envelope integrity and membrane homeostasis. The protein is Inner membrane-spanning protein YciB of Salmonella arizonae (strain ATCC BAA-731 / CDC346-86 / RSK2980).